The sequence spans 445 residues: tRNA-2-methylthio-N(6)-dimethylallyladenosine synthase (445 aa).

The region spanning 3–120 is the MTTase N-terminal domain; that stretch reads RKLFIQTHGC…LPGLITQAAS (118 aa). Cys12, Cys49, Cys83, Cys157, Cys161, and Cys164 together coordinate [4Fe-4S] cluster. The Radical SAM core domain maps to 143–375; sequence SVDGPSAFVS…QQRINQNVQD (233 aa). The 65-residue stretch at 378 to 442 folds into the TRAM domain; it reads RKMVGSTQRI…SNSLLGTDPR (65 aa).

It belongs to the methylthiotransferase family. MiaB subfamily. In terms of assembly, monomer. [4Fe-4S] cluster is required as a cofactor.

The protein localises to the cytoplasm. It catalyses the reaction N(6)-dimethylallyladenosine(37) in tRNA + (sulfur carrier)-SH + AH2 + 2 S-adenosyl-L-methionine = 2-methylsulfanyl-N(6)-dimethylallyladenosine(37) in tRNA + (sulfur carrier)-H + 5'-deoxyadenosine + L-methionine + A + S-adenosyl-L-homocysteine + 2 H(+). Its function is as follows. Catalyzes the methylthiolation of N6-(dimethylallyl)adenosine (i(6)A), leading to the formation of 2-methylthio-N6-(dimethylallyl)adenosine (ms(2)i(6)A) at position 37 in tRNAs that read codons beginning with uridine. The polypeptide is tRNA-2-methylthio-N(6)-dimethylallyladenosine synthase (Alcanivorax borkumensis (strain ATCC 700651 / DSM 11573 / NCIMB 13689 / SK2)).